The chain runs to 147 residues: HTH-type transcriptional regulator HmrR (147 aa).

Residues 1–69 enclose the HTH merR-type domain; it reads MNIGEASKVS…VEQIKELLAL (69 aa). The H-T-H motif DNA-binding region spans 4 to 23; it reads GEASKVSGVSSKMIRYYEQI.

As to quaternary structure, homodimer.

It is found in the cytoplasm. Functionally, regulates the transcription of actP. It detects cytoplasmic copper stress and activates transcription in response to increasing copper concentrations. In the absence of copper, it negatively regulates the transcription of actP. This Sinorhizobium medicae (strain WSM419) (Ensifer medicae) protein is HTH-type transcriptional regulator HmrR (hmrR).